Consider the following 254-residue polypeptide: Cyclin homolog (254 aa).

It belongs to the cyclin family. Cyclin D subfamily.

In terms of biological role, may be highly relevant to the process of cellular transformation and rapid T-cell proliferation effected by HVS during latent infections of T-cells in susceptible hosts. In Saimiriine herpesvirus 2 (strain 11) (SaHV-2), this protein is Cyclin homolog (72).